A 61-amino-acid chain; its full sequence is uncharacterized protein (61 aa).

Residues W24–R60 adopt a coiled-coil conformation.

This is an uncharacterized protein from Archaeoglobus fulgidus (strain ATCC 49558 / DSM 4304 / JCM 9628 / NBRC 100126 / VC-16).